The sequence spans 448 residues: Probable protein phosphatase 2C 74 (448 aa).

The disordered stretch occupies residues 1-48 (MGSCLSSSGGGGSRRSLHGSPHVPGPGRRKRPPKRRPGSCSSSFDNTE). Residue Gly2 is the site of N-myristoyl glycine attachment. The segment covering 27–37 (GRRKRPPKRRP) has biased composition (basic residues). Residues 67 to 384 (TVSLFSQQGK…DDCAVVCLFL (318 aa)) enclose the PPM-type phosphatase domain. Mn(2+) contacts are provided by Asp103, Gly104, Asp329, and Asp375. A disordered region spans residues 401–431 (HINNGVTEPEPDTASSSTPDSGTGSPELNGV). A compositionally biased stretch (low complexity) spans 412 to 426 (DTASSSTPDSGTGSP).

Belongs to the PP2C family. Interacts with KIN10. The cofactor is Mg(2+). Mn(2+) serves as cofactor. Expressed in the whole plant.

The protein localises to the cell membrane. It catalyses the reaction O-phospho-L-seryl-[protein] + H2O = L-seryl-[protein] + phosphate. The enzyme catalyses O-phospho-L-threonyl-[protein] + H2O = L-threonyl-[protein] + phosphate. Functionally, acts as a protein phosphatase. The protein is Probable protein phosphatase 2C 74 of Arabidopsis thaliana (Mouse-ear cress).